A 445-amino-acid chain; its full sequence is Amino-acid acetyltransferase (445 aa).

Residues 299–438 (EQVRQAQIDD…QGLYNYQRNS (140 aa)) enclose the N-acetyltransferase domain.

It belongs to the acetyltransferase family. ArgA subfamily.

It localises to the cytoplasm. The enzyme catalyses L-glutamate + acetyl-CoA = N-acetyl-L-glutamate + CoA + H(+). It participates in amino-acid biosynthesis; L-arginine biosynthesis; N(2)-acetyl-L-ornithine from L-glutamate: step 1/4. This Vibrio atlanticus (strain LGP32) (Vibrio splendidus (strain Mel32)) protein is Amino-acid acetyltransferase.